We begin with the raw amino-acid sequence, 240 residues long: UDP-2,3-diacylglucosamine hydrolase (240 aa).

Residues D8, H10, D41, N79, and H114 each contribute to the Mn(2+) site. 79–80 (NR) lines the substrate pocket. The substrate site is built by D122, S160, N164, K167, and H195. Positions 195 and 197 each coordinate Mn(2+).

It belongs to the LpxH family. Requires Mn(2+) as cofactor.

Its subcellular location is the cell inner membrane. The catalysed reaction is UDP-2-N,3-O-bis[(3R)-3-hydroxytetradecanoyl]-alpha-D-glucosamine + H2O = 2-N,3-O-bis[(3R)-3-hydroxytetradecanoyl]-alpha-D-glucosaminyl 1-phosphate + UMP + 2 H(+). It participates in glycolipid biosynthesis; lipid IV(A) biosynthesis; lipid IV(A) from (3R)-3-hydroxytetradecanoyl-[acyl-carrier-protein] and UDP-N-acetyl-alpha-D-glucosamine: step 4/6. In terms of biological role, hydrolyzes the pyrophosphate bond of UDP-2,3-diacylglucosamine to yield 2,3-diacylglucosamine 1-phosphate (lipid X) and UMP by catalyzing the attack of water at the alpha-P atom. Involved in the biosynthesis of lipid A, a phosphorylated glycolipid that anchors the lipopolysaccharide to the outer membrane of the cell. In Yersinia pestis bv. Antiqua (strain Angola), this protein is UDP-2,3-diacylglucosamine hydrolase.